The following is a 119-amino-acid chain: Large ribosomal subunit protein bL20 (119 aa).

It belongs to the bacterial ribosomal protein bL20 family.

Functionally, binds directly to 23S ribosomal RNA and is necessary for the in vitro assembly process of the 50S ribosomal subunit. It is not involved in the protein synthesizing functions of that subunit. In Geobacillus sp. (strain WCH70), this protein is Large ribosomal subunit protein bL20.